The chain runs to 159 residues: Deoxyuridine 5'-triphosphate nucleotidohydrolase (159 aa).

Positions 79, 92, 95, 98, 103, 148, 153, and 154 each coordinate dUMP.

The protein belongs to the dUTPase family. In terms of assembly, homotrimer. Mg(2+) serves as cofactor.

It carries out the reaction dUTP + H2O = dUMP + diphosphate + H(+). It functions in the pathway pyrimidine metabolism; dUMP biosynthesis; dUMP from dCTP (dUTP route): step 2/2. Involved in nucleotide metabolism via production of dUMP, the immediate precursor of thymidine nucleotides, and decreases the intracellular concentration of dUTP so that uracil cannot be incorporated into DNA. The polypeptide is Deoxyuridine 5'-triphosphate nucleotidohydrolase (DUT1) (Candida albicans (strain SC5314 / ATCC MYA-2876) (Yeast)).